Reading from the N-terminus, the 435-residue chain is Tol-Pal system protein TolB (435 aa).

Residues 1–26 (MKIFSPIRLVLAIAALMSVFSAPAFA) form the signal peptide.

This sequence belongs to the TolB family. In terms of assembly, the Tol-Pal system is composed of five core proteins: the inner membrane proteins TolA, TolQ and TolR, the periplasmic protein TolB and the outer membrane protein Pal. They form a network linking the inner and outer membranes and the peptidoglycan layer.

The protein localises to the periplasm. Its function is as follows. Part of the Tol-Pal system, which plays a role in outer membrane invagination during cell division and is important for maintaining outer membrane integrity. This is Tol-Pal system protein TolB from Agrobacterium fabrum (strain C58 / ATCC 33970) (Agrobacterium tumefaciens (strain C58)).